The following is a 141-amino-acid chain: Hemoglobin subunit alpha-1/2 (141 aa).

The region spanning 1 to 141 (VLSPADKTNV…VSTVLTSKYR (141 aa)) is the Globin domain. The residue at position 3 (S3) is a Phosphoserine. Position 7 is an N6-succinyllysine (K7). T8 is subject to Phosphothreonine. K11 carries the N6-succinyllysine modification. At K16 the chain carries N6-acetyllysine; alternate. K16 bears the N6-succinyllysine; alternate mark. Position 24 is a phosphotyrosine (Y24). S35 carries the post-translational modification Phosphoserine. K40 is modified (N6-succinyllysine). The residue at position 49 (S49) is a Phosphoserine. H58 lines the O2 pocket. H87 lines the heme b pocket. At S102 the chain carries Phosphoserine. At T108 the chain carries Phosphothreonine. 2 positions are modified to phosphoserine: S124 and S131. 2 positions are modified to phosphothreonine: T134 and T137. At S138 the chain carries Phosphoserine.

The protein belongs to the globin family. Heterotetramer of two alpha chains and two beta chains. As to expression, red blood cells.

Involved in oxygen transport from the lung to the various peripheral tissues. The sequence is that of Hemoglobin subunit alpha-1/2 from Macaca speciosa (Stump-tail macaque).